We begin with the raw amino-acid sequence, 238 residues long: MTLNLAEYDVLVFDIEGTVCPISFVKDVLFPYALEALPKVLDQEWDSPEFAKYRDAFPEEYRNSRPDFEAHVRDLVKRDVKIAYLKSLQGYLWLQGYKSGDIVAPLFPDVDPFFNQAVKDGKKIIIYSSGSVPAQKLLFSHTNSEKSDMTPLIADYFDTTNAGPKTEVDSYRKIISSHPEHKDLGRWLFLSDNIHEVSAAVEAGIRSVPVIRDGNAPLPPDNSLTKLAISEFKHSEDA.

Mg(2+) is bound by residues D14 and E16. Residues 128–129 (SS) and K165 each bind substrate. A Mg(2+)-binding site is contributed by D192.

It belongs to the HAD-like hydrolase superfamily. MasA/MtnC family. As to quaternary structure, monomer. It depends on Mg(2+) as a cofactor.

It localises to the cytoplasm. The protein resides in the nucleus. The enzyme catalyses 5-methylsulfanyl-2,3-dioxopentyl phosphate + H2O = 1,2-dihydroxy-5-(methylsulfanyl)pent-1-en-3-one + phosphate. It participates in amino-acid biosynthesis; L-methionine biosynthesis via salvage pathway; L-methionine from S-methyl-5-thio-alpha-D-ribose 1-phosphate: step 3/6. The protein operates within amino-acid biosynthesis; L-methionine biosynthesis via salvage pathway; L-methionine from S-methyl-5-thio-alpha-D-ribose 1-phosphate: step 4/6. In terms of biological role, bifunctional enzyme that catalyzes the enolization of 2,3-diketo-5-methylthiopentyl-1-phosphate (DK-MTP-1-P) into the intermediate 2-hydroxy-3-keto-5-methylthiopentenyl-1-phosphate (HK-MTPenyl-1-P), which is then dephosphorylated to form the acireductone 1,2-dihydroxy-3-keto-5-methylthiopentene (DHK-MTPene). The protein is Enolase-phosphatase E1 of Fusarium vanettenii (strain ATCC MYA-4622 / CBS 123669 / FGSC 9596 / NRRL 45880 / 77-13-4) (Fusarium solani subsp. pisi).